A 27-amino-acid chain; its full sequence is Phospholipase A2 taicatoxin (27 aa).

Belongs to the phospholipase A2 family. Group I subfamily. As to quaternary structure, heterotrimer composed of an alpha-neurotoxin-like peptide of 8 kDa (AC P0CJ35), this neurotoxic phospholipase of 16 kDa and a serine protease inhibitor of 7 kDa (AC B7S4N9) at an approximate stoichiometry of 1:1:4; non-covalently linked. It depends on Ca(2+) as a cofactor. In terms of processing, contains 7 disulfide bonds. As to expression, expressed by the venom gland.

The protein localises to the secreted. The enzyme catalyses a 1,2-diacyl-sn-glycero-3-phosphocholine + H2O = a 1-acyl-sn-glycero-3-phosphocholine + a fatty acid + H(+). Heterotrimer: blocks the voltage-dependent L-type calcium channels from the heart, and the small conductance calcium-activated potassium channels in the chromaffin cells and in the brain. Is very toxic to mice. Its function is as follows. Monomer: Snake venom phospholipase A2 (PLA2) that has neurotoxic activities. Voltage-dependently affects ionic currents in chick (Gallus domesticus) dorsal root ganglion cells. PLA2 catalyzes the calcium-dependent hydrolysis of the 2-acyl groups in 3-sn-phosphoglycerides. The chain is Phospholipase A2 taicatoxin from Oxyuranus scutellatus scutellatus (Australian taipan).